A 436-amino-acid polypeptide reads, in one-letter code: UPF0597 protein YhaM (436 aa).

The protein belongs to the UPF0597 family.

This chain is UPF0597 protein YhaM, found in Escherichia coli (strain SE11).